The chain runs to 503 residues: uncharacterized protein (503 aa).

It belongs to the Mg-chelatase subunits D/I family. ComM subfamily.

This is an uncharacterized protein from Mycobacterium bovis (strain ATCC BAA-935 / AF2122/97).